A 500-amino-acid chain; its full sequence is Signal transduction histidine-protein kinase/phosphatase UhpB (500 aa).

8 helical membrane passes run 8-28 (LITV…LWSI), 78-98 (VALA…LPVA), 112-132 (LLLQ…PWLG), 140-160 (ALLL…VFWH), 185-205 (HLIW…GLPA), 207-224 (LSRF…ALAW), 231-249 (ALIA…QTWH), and 253-273 (VDLL…GAGI). Residues 274–500 (QRLRELNQSL…VSVSLPQRYV (227 aa)) lie on the Cytoplasmic side of the membrane. Residues 311–499 (ELHDDIGQTI…RVSVSLPQRY (189 aa)) enclose the Histidine kinase domain. Residue His313 is modified to Phosphohistidine; by autocatalysis.

Post-translationally, autophosphorylated.

It is found in the cell inner membrane. It carries out the reaction ATP + protein L-histidine = ADP + protein N-phospho-L-histidine.. Its function is as follows. Part of the UhpABC signaling cascade that controls the expression of the hexose phosphate transporter UhpT. UhpB functions as a membrane-associated protein kinase that autophosphorylates in response to interaction with UhpC, and subsequently transfers its phosphate group to the response regulator UhpA. Can also dephosphorylate UhpA. The sequence is that of Signal transduction histidine-protein kinase/phosphatase UhpB (uhpB) from Salmonella typhimurium (strain LT2 / SGSC1412 / ATCC 700720).